Here is a 338-residue protein sequence, read N- to C-terminus: NLP effector protein 6 (338 aa).

Positions 1 to 19 (MRFTTIFWISLTVLATVRA) are cleaved as a signal peptide. The segment at 68–119 (LTLSPSASSPAKRNVTLPPDTTMRPDPRQTEPPTEAPTPASTPAPTPDPGPW) is disordered. The N-linked (GlcNAc...) asparagine glycan is linked to Asn81. The span at 101 to 117 (TEAPTPASTPAPTPDPG) shows a compositional bias: pro residues. A Conserved undecapeptide motif I motif is present at residues 205–215 (AIMYSWYFPKD). A Hepta-peptide GHRHDWE motif II motif is present at residues 222–227 (GHRHDW).

The protein belongs to the Necrosis inducing protein (NPP1) family.

The protein resides in the secreted. Its function is as follows. Secreted effector that contributes strongly to virulence during infection by P.capsici. Causes large necrotic areas in both host C.annuum and non-host N.benthamiana. The chain is NLP effector protein 6 from Phytophthora capsici.